Consider the following 271-residue polypeptide: Shikimate dehydrogenase (NADP(+)) (271 aa).

Shikimate is bound by residues 16 to 18 (SRS) and threonine 63. Catalysis depends on lysine 67, which acts as the Proton acceptor. Asparagine 88 and aspartate 104 together coordinate shikimate. NADP(+)-binding positions include 128-132 (GAGGA), 152-157 (NRTASK), and methionine 215. Tyrosine 217 contacts shikimate. Glycine 238 is a binding site for NADP(+).

This sequence belongs to the shikimate dehydrogenase family. In terms of assembly, homodimer.

The catalysed reaction is shikimate + NADP(+) = 3-dehydroshikimate + NADPH + H(+). It participates in metabolic intermediate biosynthesis; chorismate biosynthesis; chorismate from D-erythrose 4-phosphate and phosphoenolpyruvate: step 4/7. Functionally, involved in the biosynthesis of the chorismate, which leads to the biosynthesis of aromatic amino acids. Catalyzes the reversible NADPH linked reduction of 3-dehydroshikimate (DHSA) to yield shikimate (SA). The sequence is that of Shikimate dehydrogenase (NADP(+)) from Chromohalobacter salexigens (strain ATCC BAA-138 / DSM 3043 / CIP 106854 / NCIMB 13768 / 1H11).